A 783-amino-acid polypeptide reads, in one-letter code: MLVDNQTSTTTNLVGTKRKSPENDFIMTIDIAGDDDFVDDDENDDDEDLKEDFFFEESDKPQLPWDFAPTIEKMKQQTHKKTDGQTSLEDKINQRKTVKKLKADDDKSVTTKTTNNNKSKKSNNNDNDDDDEEVNEEEEEEEEEEDNENEKEINKKQQQQQQQSNKQTTDKIKVLQSNRKLKKIVEEELPTFEELHLSRPLLKAVQKLGFSQPTPIQAKAIPLALNGKDILASASTGSGKTAAFLLPVLERLLFRDSEYRAIRVLILLPTRELALQCQSVMENLAQFSNITSCLIVGGLSNKAQEVELRKSPDVVIATPGRLIDHLLNAHGIGLDDLEILILDEADRLLDMGFKDEINKIVESCPTNRQTMLFSATLNDEVKTLAKLSLQQPIRVQVDALMQVTSTLEQEFVKIKPQHLSDRPAILLSLCTRVFNQGGTIIFCRSKKEVHRLRIIFGLSDLKAAELHGNLSQEQRFDSLQQFRDGQVNYLLASDVASRGLDIIGVKTVINYNMPNNMANYIHRVGRTARAGMDGKSCSFITDNDRKLLKDIVTKARNKAKSRSVSQDNVNFWRNRIEELTEDIKSIVREEMKEADLRKAEKTLDKAEKIISNADANVETPKVWYKTKQEEDKSKELWKIENNIVNPGKKLKAPIDVTGVNNVPSIKKLKQKKDPYYGLSRKQRRHRQFKEEFEREQQEERKRKGGDDGDDNEEIDSGKMFERSQRAQKSSGKETKRIESLRRNYMAGGALTDQEKQRVDNKKSKKNKRMIVNKKEKKQRLSKK.

Polar residues predominate over residues 1–14 (MLVDNQTSTTTNLV). Disordered stretches follow at residues 1-20 (MLVDNQTSTTTNLVGTKRKS) and 56-173 (EESD…DKIK). Basic and acidic residues predominate over residues 72–93 (EKMKQQTHKKTDGQTSLEDKIN). A coiled-coil region spans residues 72–180 (EKMKQQTHKK…KIKVLQSNRK (109 aa)). A compositionally biased stretch (low complexity) spans 110–125 (TTKTTNNNKSKKSNNN). Residues 126-149 (DNDDDDEEVNEEEEEEEEEEDNEN) are compositionally biased toward acidic residues. The span at 156–167 (KQQQQQQQSNKQ) shows a compositional bias: low complexity. A Q motif motif is present at residues 190–218 (PTFEELHLSRPLLKAVQKLGFSQPTPIQA). The region spanning 221–395 (IPLALNGKDI…KLSLQQPIRV (175 aa)) is the Helicase ATP-binding domain. Residue 234 to 241 (ASTGSGKT) coordinates ATP. The DEAD box motif lies at 343–346 (DEAD). The Helicase C-terminal domain maps to 406–570 (TLEQEFVKIK…SRSVSQDNVN (165 aa)). The segment at 665–783 (IKKLKQKKDP…KEKKQRLSKK (119 aa)) is disordered. 3 stretches are compositionally biased toward basic and acidic residues: residues 688 to 706 (FKEEFEREQQEERKRKGGD), 715 to 741 (DSGKMFERSQRAQKSSGKETKRIESLR), and 752 to 761 (DQEKQRVDNK). Residues 762 to 783 (KSKKNKRMIVNKKEKKQRLSKK) show a composition bias toward basic residues.

This sequence belongs to the DEAD box helicase family. DDX27/DRS1 subfamily.

The protein localises to the nucleus. The protein resides in the nucleolus. Its subcellular location is the chromosome. The enzyme catalyses ATP + H2O = ADP + phosphate + H(+). Functionally, probable ATP-dependent RNA helicase. Component of the nucleolar ribosomal RNA (rRNA) processing machinery that may be involved in ribosome biogenesis. The sequence is that of Probable ATP-dependent RNA helicase ddx27 (ddx27) from Dictyostelium discoideum (Social amoeba).